The sequence spans 227 residues: NADH-quinone oxidoreductase subunit C (227 aa).

The protein belongs to the complex I 30 kDa subunit family. In terms of assembly, NDH-1 is composed of 14 different subunits. Subunits NuoB, C, D, E, F, and G constitute the peripheral sector of the complex.

The protein resides in the cell inner membrane. It carries out the reaction a quinone + NADH + 5 H(+)(in) = a quinol + NAD(+) + 4 H(+)(out). NDH-1 shuttles electrons from NADH, via FMN and iron-sulfur (Fe-S) centers, to quinones in the respiratory chain. The immediate electron acceptor for the enzyme in this species is believed to be ubiquinone. Couples the redox reaction to proton translocation (for every two electrons transferred, four hydrogen ions are translocated across the cytoplasmic membrane), and thus conserves the redox energy in a proton gradient. The sequence is that of NADH-quinone oxidoreductase subunit C from Coxiella burnetii (strain RSA 331 / Henzerling II).